Here is a 27-residue protein sequence, read N- to C-terminus: Cupiennin-3d (27 aa).

At glutamate 27 the chain carries Glutamic acid 1-amide.

As to expression, expressed by the venom gland.

The protein localises to the secreted. The chain is Cupiennin-3d from Cupiennius salei (American wandering spider).